We begin with the raw amino-acid sequence, 822 residues long: Serine/threonine-protein kinase kin-29 (822 aa).

The Protein kinase domain maps to 16 to 267 (YDVGRAIGKG…IQNVLQHRWM (252 aa)). Residues 22–30 (IGKGNFATV) and Lys45 contribute to the ATP site. The active-site Proton acceptor is Asp138. Disordered stretches follow at residues 348–367 (EGTG…LSGK), 389–423 (LSSP…RQFG), and 577–602 (NPIP…WASP). Residues 394-406 (CDSDDSSNSDLCD) are compositionally biased toward acidic residues.

The protein belongs to the protein kinase superfamily. CAMK Ser/Thr protein kinase family. SNF1 subfamily. In terms of assembly, interacts with tax-6. Mg(2+) is required as a cofactor. Post-translationally, autophosphorylated. Elevated cAMP levels appears to act via PKA to directly or indirectly phosphorylate multiple sites on kin-29 and inhibit function. As to expression, primarily neuronal, with additional expression in body wall muscle and hypodermal cells. Among neuronal cells, expressed in multiple sensory neurons and interneurons in the lateral, anterior, and lumbar ganglia, as well as in motor neurons in the ventral motor cord. Present in the AWB and AWC olfactory neurons.

Its subcellular location is the cytoplasm. The protein resides in the nucleus. The enzyme catalyses L-seryl-[protein] + ATP = O-phospho-L-seryl-[protein] + ADP + H(+). It catalyses the reaction L-threonyl-[protein] + ATP = O-phospho-L-threonyl-[protein] + ADP + H(+). Functionally, regulates chemoreceptor expression by phosphorylating the hda-4 class II histone deacetylase (HDAC) and inhibiting the gene repression functions of hda-4 and the mef-2 transcription factor, enabling the correct sensing and transduction of food signals. Role in determining body size, the dauer decision and serotonin-mediated egg laying. May modulate the Sma/Mab pathway and regulates development in the later larval stages. The protein is Serine/threonine-protein kinase kin-29 of Caenorhabditis elegans.